A 491-amino-acid polypeptide reads, in one-letter code: MANYFNTLNLRQQLAQLGKCRFMGRDEFADGASYLQGKKVVIVGCGAQGLNQGLNMRDSGLDISYALRKEAIAEKRASWRKATENGFKVGTYEELIPQADLVVNLTPDKQHSDVVRTVQPLMKDGAALGYSHGFNIVEVGEQIRKDITVVMVAPKCPGTEVREEYKRGFGVPTLIAVHPENDPKGEGMAIAKAWAAATGGHRAGVLESSFVAEVKSDLMGEQTILCGMLQAGSLLCFDKLVEEGTDPAYAEKLIQFGWETITEALKQGGITLMMDRLSNPAKLRAYALSEQLKEIMAPLFQKHMDDIISGEFSSGMMADWANDDKKLLTWREETGKTAFETAPQYEGKIGEQEYFDKGVLMIAMVKAGVELAFETMVDSGIIEESAYYESLHELPLIANTIVRKRLYEMNVVISDTAEYGNYLFSYACVPLLKPFMAELQPGDLGKAIPEGAVDNAQLRDVNEAIRSHAIEQVGKKLRGYMTDMKRIAVAG.

Residues 15-208 (AQLGKCRFMG…GGHRAGVLES (194 aa)) enclose the KARI N-terminal Rossmann domain. Residues 45–48 (CGAQ), R68, R76, S78, and 108–110 (DKQ) contribute to the NADP(+) site. H132 is an active-site residue. Position 158 (G158) interacts with NADP(+). KARI C-terminal knotted domains are found at residues 209–344 (SFVA…TAPQ) and 345–484 (YEGK…MTDM). 4 residues coordinate Mg(2+): D217, E221, E389, and E393. S414 provides a ligand contact to substrate.

Belongs to the ketol-acid reductoisomerase family. Mg(2+) is required as a cofactor.

It catalyses the reaction (2R)-2,3-dihydroxy-3-methylbutanoate + NADP(+) = (2S)-2-acetolactate + NADPH + H(+). The catalysed reaction is (2R,3R)-2,3-dihydroxy-3-methylpentanoate + NADP(+) = (S)-2-ethyl-2-hydroxy-3-oxobutanoate + NADPH + H(+). It functions in the pathway amino-acid biosynthesis; L-isoleucine biosynthesis; L-isoleucine from 2-oxobutanoate: step 2/4. The protein operates within amino-acid biosynthesis; L-valine biosynthesis; L-valine from pyruvate: step 2/4. In terms of biological role, involved in the biosynthesis of branched-chain amino acids (BCAA). Catalyzes an alkyl-migration followed by a ketol-acid reduction of (S)-2-acetolactate (S2AL) to yield (R)-2,3-dihydroxy-isovalerate. In the isomerase reaction, S2AL is rearranged via a Mg-dependent methyl migration to produce 3-hydroxy-3-methyl-2-ketobutyrate (HMKB). In the reductase reaction, this 2-ketoacid undergoes a metal-dependent reduction by NADPH to yield (R)-2,3-dihydroxy-isovalerate. The protein is Ketol-acid reductoisomerase (NADP(+)) of Shigella flexneri.